Consider the following 41-residue polypeptide: U-megalopygitoxin(4)-Mo5 (41 aa).

Positions 1–23 (MKCSLLLVVFAAMVALFAAGTNA) are cleaved as a signal peptide.

Belongs to the caterpillar 4 family. As to expression, expressed by the venom apparatus.

It is found in the secreted. In terms of biological role, probable toxin. The protein is U-megalopygitoxin(4)-Mo5 of Megalopyge opercularis (Southern flannel moth).